A 423-amino-acid polypeptide reads, in one-letter code: MAAPRVFPLSCAVQQYAWGKMGSNSEVARLLASSDPLAQIAEDKPYAELWMGTHPRGDAKILDNRISQKTLSQWIAENQDSLGSKVKDTFNGNLPFLFKVLSVETPLSIQAHPNKELAEKLHLQAPQHYPDANHKPEMAIALTPFQGLCGFRPVEEIVTFLKKVPEFQFLIGDEAATHLKQTMSHDSQAVASSLQSCFSHLMKSEKKVVVEQLNLLVKRISQQAAAGNNMEDIFGELLLQLHQQYPGDIGCFAIYFLNLLTLKPGEAMFLEANVPHAYLKGDCVECMACSDNTVRAGLTPKFIDVPTLCEMLSYTPSSSKDRLFLPTRSREDPYLSIYDPPVPDFTIMKTEVPGSVTGYKVLALDSASILLMVQGTVIASTPTTQTPIPLQRGGVLFIGANESVSLKLTEPKDLLIFRACCLL.

An N-acetylalanine modification is found at alanine 2. 2 positions are modified to phosphoserine: serine 102 and serine 108. Positions 110, 112, 137, and 276 each coordinate Zn(2+). Arginine 295 is an active-site residue.

This sequence belongs to the mannose-6-phosphate isomerase type 1 family. The cofactor is Zn(2+).

It is found in the cytoplasm. It carries out the reaction D-mannose 6-phosphate = D-fructose 6-phosphate. The protein operates within nucleotide-sugar biosynthesis; GDP-alpha-D-mannose biosynthesis; alpha-D-mannose 1-phosphate from D-fructose 6-phosphate: step 1/2. Isomerase that catalyzes the interconversion of fructose-6-P and mannose-6-P and has a critical role in the supply of D-mannose derivatives required for many eukaryotic glycosylation reactions. This is Mannose-6-phosphate isomerase (MPI) from Pan troglodytes (Chimpanzee).